We begin with the raw amino-acid sequence, 335 residues long: Probable deoxyhypusine synthase (335 aa).

The active-site Nucleophile is Lys308.

It belongs to the deoxyhypusine synthase family. Requires NAD(+) as cofactor.

It carries out the reaction [eIF5A protein]-L-lysine + spermidine = [eIF5A protein]-deoxyhypusine + propane-1,3-diamine. Its pathway is protein modification; eIF5A hypusination. Functionally, catalyzes the NAD-dependent oxidative cleavage of spermidine and the subsequent transfer of the butylamine moiety of spermidine to the epsilon-amino group of a specific lysine residue of the eIF-5A precursor protein to form the intermediate deoxyhypusine residue. This chain is Probable deoxyhypusine synthase, found in Thermococcus onnurineus (strain NA1).